Reading from the N-terminus, the 597-residue chain is Dynein intermediate chain 3, ciliary (597 aa).

7 WD repeats span residues 159-210, 213-253, 260-301, 314-354, 361-400, 404-444, and 449-488; these read EIKR…KPEF, KPVS…QAVE, SHHD…EPTE, ENAQ…PPEK, EHIG…SSIM, YHMS…KDPT, and VSDD…CTMQ. 2 disordered regions span residues 512–546 and 562–597; these read RQRE…VAAA and AAQQ…EKEG. Acidic residues predominate over residues 528–542; that stretch reads QDDDEEGGPDEEEDL. Over residues 584–597 the composition is skewed to basic and acidic residues; sequence GSEKKDTENGEKEG.

Belongs to the dynein intermediate chain family. In terms of assembly, consists of at least two heavy chains (alpha and beta), three intermediate chains and several light chains.

The protein localises to the cytoplasm. It is found in the cytoskeleton. Its subcellular location is the cilium axoneme. May play a role in the regulation of dynein heavy chain activity. This chain is Dynein intermediate chain 3, ciliary, found in Heliocidaris crassispina (Sea urchin).